The chain runs to 259 residues: Protoheme IX farnesyltransferase (259 aa).

8 helical membrane passes run 15-35 (LICLTALLLAAAAAAMINGVL), 61-81 (ATVAAAGMLFAALALSITFLP), 83-103 (LTTALILLAIFSYTPLYTLWF), 109-129 (WGVVPGGIPGALPVLVGASAV), 137-157 (PLILFLVMLLWQPPHFWALAL), 182-202 (VCIFVFAALLLPASLALWFTG), 208-228 (FAIEALCLGFFNLFSCYLYLV), and 236-256 (AFQASIFYLLGLLSAVIIDIC).

It belongs to the UbiA prenyltransferase family. Protoheme IX farnesyltransferase subfamily.

It localises to the cell inner membrane. The enzyme catalyses heme b + (2E,6E)-farnesyl diphosphate + H2O = Fe(II)-heme o + diphosphate. The protein operates within porphyrin-containing compound metabolism; heme O biosynthesis; heme O from protoheme: step 1/1. In terms of biological role, converts heme B (protoheme IX) to heme O by substitution of the vinyl group on carbon 2 of heme B porphyrin ring with a hydroxyethyl farnesyl side group. The sequence is that of Protoheme IX farnesyltransferase from Geotalea uraniireducens (strain Rf4) (Geobacter uraniireducens).